Here is a 163-residue protein sequence, read N- to C-terminus: uncharacterized protein (163 aa).

This is an uncharacterized protein from Rickettsia conorii (strain ATCC VR-613 / Malish 7).